The sequence spans 173 residues: Bifunctional protein PyrR (173 aa).

Positions 93–105 (VILVDDVLYTGRT) match the PRPP-binding motif.

Belongs to the purine/pyrimidine phosphoribosyltransferase family. PyrR subfamily. In terms of assembly, homodimer and homohexamer; in equilibrium.

The enzyme catalyses UMP + diphosphate = 5-phospho-alpha-D-ribose 1-diphosphate + uracil. In terms of biological role, regulates transcriptional attenuation of the pyrimidine nucleotide (pyr) operon by binding in a uridine-dependent manner to specific sites on pyr mRNA. This disrupts an antiterminator hairpin in the RNA and favors formation of a downstream transcription terminator, leading to a reduced expression of downstream genes. Functionally, also displays a weak uracil phosphoribosyltransferase activity which is not physiologically significant. The sequence is that of Bifunctional protein PyrR from Streptococcus suis (strain 05ZYH33).